The chain runs to 579 residues: XK-related protein 7 (579 aa).

A compositionally biased stretch (low complexity) spans 1–18 (MAAKSDGAAASAGPDPEG). The segment at 1-40 (MAAKSDGAAASAGPDPEGAAGGARGSAGGRGEAAAAAGPP) is disordered. Gly residues predominate over residues 19–31 (AAGGARGSAGGRG). 2 consecutive transmembrane segments (helical) span residues 59 to 79 (WVLC…WLAA) and 89 to 109 (YFSL…LLSF). Residues 146–165 (GAFRTKEGSPEPGPQPAPSS) are disordered. The next 5 membrane-spanning stretches (helical) occupy residues 260 to 280 (LLPA…LASY), 314 to 334 (GLAF…CIVG), 355 to 375 (GEEI…WFNV), 384 to 404 (MTLY…FWYS), and 415 to 435 (LIMV…MCVY). The disordered stretch occupies residues 466–510 (ADAITSPPRSLPRTTGAERDGASAGERAGTPTPPVFQVRPGLPPT).

The protein belongs to the XK family.

The protein resides in the cell membrane. In Pan troglodytes (Chimpanzee), this protein is XK-related protein 7 (XKR7).